The chain runs to 333 residues: MRTVRPRAGSLAYYPRKRAKGIVPKYQSWPEYNGQPMLQGFAGYKAGMTHVIMIDDHKKSPTEGKEVMVPVTVIEIPAMTVAAIRVYVKDTYGKHPLTEVWAENLEALSGRITKAKTNNAAKATEKINAAIGDVVEVMVLMYTKPTELTGVPKKVPDLMEIRVAGGSAQERFDYALSILGTDVDMKSLLSEGQFADITGITKGKGFQGAVKRFGITLRKRKHARTKKERHIGTLGPWTPHHVRWQVPMPGQMGFQQRTEFNKRIIKIGENADEINPAGGFLHYGLVRNNYVLIKGSIPGPAKRLVRIRSATRMGEQKIQAPVVEYVSLQSKQG.

It belongs to the universal ribosomal protein uL3 family. Part of the 50S ribosomal subunit. Forms a cluster with proteins L14 and L24e.

In terms of biological role, one of the primary rRNA binding proteins, it binds directly near the 3'-end of the 23S rRNA, where it nucleates assembly of the 50S subunit. This Methanocorpusculum labreanum (strain ATCC 43576 / DSM 4855 / Z) protein is Large ribosomal subunit protein uL3.